The sequence spans 250 residues: Developmental protein SEPALLATA 2 (250 aa).

Residues 3–57 (RGRVELKRIENKINRQVTFAKRRNGLLKKAYELSVLCDAEVSLIVFSNRGKLYEF) enclose the MADS-box domain. The stretch at 85 to 150 (AKELENSYRE…CIKTQYMLDQ (66 aa)) forms a coiled coil. A K-box domain is found at 88–178 (LENSYREYLK…SMKLEDMIGV (91 aa)).

Heterodimer with AGAMOUS capable of binding to CArG-box sequences. Interacts with TT16/AGL32.

The protein resides in the nucleus. Its function is as follows. Probable transcription factor. Functions with SEPALLATA1/AGL2 and SEPALLATA3/AGL9 to ensure proper development of petals, stamens and carpels and to prevent the indeterminate growth of the flower meristem. Forms a heterodimer via the K-box domain with AG, that could be involved in genes regulation during floral meristem development. The protein is Developmental protein SEPALLATA 2 (SEP2) of Arabidopsis thaliana (Mouse-ear cress).